The chain runs to 568 residues: Small ribosomal subunit protein bS1 (568 aa).

S1 motif domains are found at residues 39–100 (KTVV…LSRE), 118–184 (GEFV…VSRR), 205–273 (GMVL…LGIK), 290–360 (GKQM…LSIK), 377–447 (GTII…LGIK), and 464–533 (GTIV…LSVK).

Belongs to the bacterial ribosomal protein bS1 family.

Functionally, binds mRNA; thus facilitating recognition of the initiation point. It is needed to translate mRNA with a short Shine-Dalgarno (SD) purine-rich sequence. The chain is Small ribosomal subunit protein bS1 (rpsA) from Rickettsia conorii (strain ATCC VR-613 / Malish 7).